A 693-amino-acid polypeptide reads, in one-letter code: Putative tyrosinase-like protein tyr-3 (693 aa).

The first 18 residues, methionine 1–serine 18, serve as a signal peptide directing secretion. The Cu cation site is built by histidine 142, histidine 152, histidine 161, histidine 281, histidine 285, and histidine 308. 4 consecutive ShKT domains span residues cysteine 472–cysteine 506, cysteine 516–cysteine 550, cysteine 591–cysteine 625, and cysteine 634–cysteine 667. 12 disulfides stabilise this stretch: cysteine 472-cysteine 506, cysteine 479-cysteine 499, cysteine 488-cysteine 503, cysteine 516-cysteine 550, cysteine 523-cysteine 543, cysteine 532-cysteine 547, cysteine 591-cysteine 625, cysteine 598-cysteine 618, cysteine 607-cysteine 622, cysteine 634-cysteine 667, cysteine 641-cysteine 660, and cysteine 650-cysteine 664.

Belongs to the tyrosinase family. Requires Cu(2+) as cofactor.

This is Putative tyrosinase-like protein tyr-3 (tyr-3) from Caenorhabditis elegans.